A 199-amino-acid chain; its full sequence is Peptidyl-tRNA hydrolase (199 aa).

Tyrosine 18 is a tRNA binding site. Histidine 23 (proton acceptor) is an active-site residue. TRNA-binding residues include tyrosine 72, asparagine 74, and asparagine 120.

It belongs to the PTH family. Monomer.

Its subcellular location is the cytoplasm. The enzyme catalyses an N-acyl-L-alpha-aminoacyl-tRNA + H2O = an N-acyl-L-amino acid + a tRNA + H(+). Its function is as follows. Hydrolyzes ribosome-free peptidyl-tRNAs (with 1 or more amino acids incorporated), which drop off the ribosome during protein synthesis, or as a result of ribosome stalling. Catalyzes the release of premature peptidyl moieties from peptidyl-tRNA molecules trapped in stalled 50S ribosomal subunits, and thus maintains levels of free tRNAs and 50S ribosomes. The sequence is that of Peptidyl-tRNA hydrolase from Bifidobacterium longum (strain DJO10A).